The sequence spans 108 residues: UPF0145 protein Fnod_0426 (108 aa).

Belongs to the UPF0145 family.

The sequence is that of UPF0145 protein Fnod_0426 from Fervidobacterium nodosum (strain ATCC 35602 / DSM 5306 / Rt17-B1).